We begin with the raw amino-acid sequence, 144 residues long: Large ribosomal subunit protein uL15 (144 aa).

A disordered region spans residues 1 to 49; the sequence is MRLNTLSPAAGSKSAPKRVGRGIGSGLGKTAGRGHKGQKSRSGGGVRVG. The segment covering 21 to 31 has biased composition (gly residues); sequence RGIGSGLGKTA.

The protein belongs to the universal ribosomal protein uL15 family. Part of the 50S ribosomal subunit.

Binds to the 23S rRNA. The chain is Large ribosomal subunit protein uL15 from Shewanella denitrificans (strain OS217 / ATCC BAA-1090 / DSM 15013).